The primary structure comprises 568 residues: Small ribosomal subunit protein bS1 (568 aa).

6 consecutive S1 motif domains span residues 27–93 (GYVA…LSRE), 111–177 (GERV…VSRR), 198–266 (GQVV…LGMK), 283–353 (GKKI…LGLK), 370–440 (GTEV…LGIK), and 459–530 (NAVV…LSIK).

Belongs to the bacterial ribosomal protein bS1 family.

Binds mRNA; thus facilitating recognition of the initiation point. It is needed to translate mRNA with a short Shine-Dalgarno (SD) purine-rich sequence. The polypeptide is Small ribosomal subunit protein bS1 (rpsA) (Rhizobium meliloti (strain 1021) (Ensifer meliloti)).